A 542-amino-acid chain; its full sequence is Chaperonin GroEL 1 (542 aa).

Residues 29 to 32 (TLGP), 86 to 90 (DGTTT), G413, 477 to 479 (NAA), and D493 each bind ATP.

The protein belongs to the chaperonin (HSP60) family. Forms a cylinder of 14 subunits composed of two heptameric rings stacked back-to-back. Interacts with the co-chaperonin GroES.

It is found in the cytoplasm. It catalyses the reaction ATP + H2O + a folded polypeptide = ADP + phosphate + an unfolded polypeptide.. Functionally, together with its co-chaperonin GroES, plays an essential role in assisting protein folding. The GroEL-GroES system forms a nano-cage that allows encapsulation of the non-native substrate proteins and provides a physical environment optimized to promote and accelerate protein folding. The chain is Chaperonin GroEL 1 from Renibacterium salmoninarum (strain ATCC 33209 / DSM 20767 / JCM 11484 / NBRC 15589 / NCIMB 2235).